A 536-amino-acid chain; its full sequence is Chlorophyllide a oxygenase, chloroplastic (536 aa).

Residues 1–36 (MNAAVFSPSALSLPISFSKTRSSFLSRKKGVKGEFR) constitute a chloroplast transit peptide. The stretch at 123–150 (IGTVKKELAGLQEELSKAHQQVHISEAR) forms a coiled coil. A Rieske domain is found at 221 to 321 (WYPVAFTADL…CLEQEGMIWI (101 aa)). 4 residues coordinate [2Fe-2S] cluster: cysteine 262, histidine 264, cysteine 281, and histidine 284. Aspartate 360, aspartate 364, histidine 367, and histidine 372 together coordinate Fe cation.

It localises to the plastid. The protein localises to the chloroplast membrane. The protein resides in the chloroplast thylakoid membrane. It carries out the reaction chlorophyllide a + 2 NADPH + 2 O2 + 2 H(+) = chlorophyllide b + 2 NADP(+) + 3 H2O. The protein operates within porphyrin-containing compound metabolism; chlorophyll biosynthesis. Its function is as follows. Catalyzes a two-step oxygenase reaction involved in the synthesis of chlorophyll b. Acts specifically on the non-esterified chlorophyllide a and not on chlorophyll a. The chain is Chlorophyllide a oxygenase, chloroplastic (CAO) from Arabidopsis thaliana (Mouse-ear cress).